Here is a 334-residue protein sequence, read N- to C-terminus: 4-hydroxyproline 2-epimerase (334 aa).

Cysteine 90 serves as the catalytic Proton acceptor. Substrate contacts are provided by residues glycine 91–histidine 92, histidine 223, and aspartate 249. Cysteine 253 acts as the Proton donor in catalysis. Substrate is bound at residue glycine 254–threonine 255.

The protein belongs to the proline racemase family. As to quaternary structure, homodimer.

It catalyses the reaction trans-4-hydroxy-L-proline = cis-4-hydroxy-D-proline. Its function is as follows. Catalyzes the epimerization of trans-4-hydroxy-L-proline (t4LHyp) to cis-4-hydroxy-D-proline (c4DHyp). Is likely involved in a degradation pathway that converts t4LHyp to alpha-ketoglutarate, which would allow P.denitrificans to grow on t4LHyp as a sole carbon source. Also seems to be involved in an alternative catabolic pathway that degrades trans-4-hydroxy-L-proline betaine (tHyp-B) to alpha-ketoglutarate; this pathway would permit the utilization of tHyp-B as a sole carbon and nitrogen source. This chain is 4-hydroxyproline 2-epimerase (hypF), found in Paracoccus denitrificans (strain Pd 1222).